We begin with the raw amino-acid sequence, 399 residues long: Succinate--CoA ligase [ADP-forming] subunit beta (399 aa).

An ATP-grasp domain is found at 9 to 254; sequence KQVLAKYGVP…EDEEDPMELE (246 aa). ATP contacts are provided by residues K46, 53-55, E109, C112, and E117; that span reads GRG. Residues N209 and D223 each contribute to the Mg(2+) site. Substrate contacts are provided by residues N274 and 331–333; that span reads GIM.

The protein belongs to the succinate/malate CoA ligase beta subunit family. Heterotetramer of two alpha and two beta subunits. Mg(2+) is required as a cofactor.

It catalyses the reaction succinate + ATP + CoA = succinyl-CoA + ADP + phosphate. It carries out the reaction GTP + succinate + CoA = succinyl-CoA + GDP + phosphate. Its pathway is carbohydrate metabolism; tricarboxylic acid cycle; succinate from succinyl-CoA (ligase route): step 1/1. Its function is as follows. Succinyl-CoA synthetase functions in the citric acid cycle (TCA), coupling the hydrolysis of succinyl-CoA to the synthesis of either ATP or GTP and thus represents the only step of substrate-level phosphorylation in the TCA. The beta subunit provides nucleotide specificity of the enzyme and binds the substrate succinate, while the binding sites for coenzyme A and phosphate are found in the alpha subunit. The polypeptide is Succinate--CoA ligase [ADP-forming] subunit beta (Rhodospirillum rubrum (strain ATCC 11170 / ATH 1.1.1 / DSM 467 / LMG 4362 / NCIMB 8255 / S1)).